The following is a 477-amino-acid chain: Glycogen synthase (477 aa).

ADP-alpha-D-glucose is bound at residue K15.

It belongs to the glycosyltransferase 1 family. Bacterial/plant glycogen synthase subfamily.

It catalyses the reaction [(1-&gt;4)-alpha-D-glucosyl](n) + ADP-alpha-D-glucose = [(1-&gt;4)-alpha-D-glucosyl](n+1) + ADP + H(+). Its pathway is glycan biosynthesis; glycogen biosynthesis. Its function is as follows. Synthesizes alpha-1,4-glucan chains using ADP-glucose. In Salmonella typhi, this protein is Glycogen synthase.